A 530-amino-acid polypeptide reads, in one-letter code: Feruloyl esterase C (530 aa).

An N-terminal signal peptide occupies residues Met-1–Glu-25. Intrachain disulfides connect Cys-31–Cys-78, Cys-66–Cys-117, Cys-190–Cys-444, Cys-259–Cys-276, Cys-285–Cys-294, and Cys-506–Cys-528. The active-site Acyl-ester intermediate is the Ser-191. Positions 260, 263, 265, 267, and 269 each coordinate Ca(2+). Active-site charge relay system residues include Asp-403 and His-443.

Belongs to the tannase family.

It localises to the secreted. The catalysed reaction is feruloyl-polysaccharide + H2O = ferulate + polysaccharide.. Its function is as follows. Involved in degradation of plant cell walls. Hydrolyzes the feruloyl-arabinose ester bond in arabinoxylans as well as the feruloyl-galactose and feruloyl-arabinose ester bonds in pectin. Active against methyl esters of sinapate (MSA) and caffeate (MCA). The sequence is that of Feruloyl esterase C (faeC) from Talaromyces stipitatus (strain ATCC 10500 / CBS 375.48 / QM 6759 / NRRL 1006) (Penicillium stipitatum).